Reading from the N-terminus, the 307-residue chain is D-alanine--D-alanine ligase (307 aa).

Residues 105–304 form the ATP-grasp domain; the sequence is KMLWKGFGLP…FEKLVEKILE (200 aa). 135–190 is an ATP binding site; sequence VARLGLPLMVKPSREGSSVGLTKVDSADKLKSAVDLALKFDDIVLIEEWLSGDELT. Mg(2+)-binding residues include D258, E271, and N273.

This sequence belongs to the D-alanine--D-alanine ligase family. Mg(2+) is required as a cofactor. Requires Mn(2+) as cofactor.

It localises to the cytoplasm. It carries out the reaction 2 D-alanine + ATP = D-alanyl-D-alanine + ADP + phosphate + H(+). The protein operates within cell wall biogenesis; peptidoglycan biosynthesis. Its function is as follows. Cell wall formation. The protein is D-alanine--D-alanine ligase of Actinobacillus succinogenes (strain ATCC 55618 / DSM 22257 / CCUG 43843 / 130Z).